A 562-amino-acid polypeptide reads, in one-letter code: Arginine--tRNA ligase (562 aa).

Positions 129–139 (ANPTGPLHVGH) match the 'HIGH' region motif.

This sequence belongs to the class-I aminoacyl-tRNA synthetase family. Monomer.

The protein resides in the cytoplasm. It carries out the reaction tRNA(Arg) + L-arginine + ATP = L-arginyl-tRNA(Arg) + AMP + diphosphate. This Xanthomonas oryzae pv. oryzae (strain MAFF 311018) protein is Arginine--tRNA ligase.